A 319-amino-acid chain; its full sequence is Olfactory receptor 8U8 (319 aa).

At 1–28 (MAHINCTQATEFILVGLTDHQELKMPLF) the chain is on the extracellular side. Asparagine 5 carries an N-linked (GlcNAc...) asparagine glycan. A helical transmembrane segment spans residues 29-49 (VLFLSIYLFTVVGNLGLILLI). Residues 50–56 (RADTSLN) are Cytoplasmic-facing. A helical transmembrane segment spans residues 57-77 (TPMYFFLSNLAFVDFCYSSVI). Residues 78–97 (TPKMLGNFLYKQNVISFDAC) lie on the Extracellular side of the membrane. A disulfide bridge connects residues cysteine 97 and cysteine 179. Residues 98–118 (ATQLGCFLTFMVSESLLLASM) form a helical membrane-spanning segment. Over 119–122 (AYDR) the chain is Cytoplasmic. Residues 123–143 (YVAICNPLLYMVVMTPGICIQ) traverse the membrane as a helical segment. The Extracellular portion of the chain corresponds to 144–204 (LVAVPYSYSF…KQLWILACAG (61 aa)). A helical transmembrane segment spans residues 205 to 225 (ITFICSVLIVFVSYMFIIFAI). The Cytoplasmic portion of the chain corresponds to 226–239 (LRMSSAEGRRKAFS). Residues 240–260 (TCSSHMLAVTIFYGTLIFMYL) form a helical membrane-spanning segment. At 261–271 (QPSSSHSLDAD) the chain is on the extracellular side. Residues 272-292 (KMASVFYTVIIPMLNPLIYSL) traverse the membrane as a helical segment. Over 293-319 (RNKDVKDALKKVIINRNHAFIFLKLRK) the chain is Cytoplasmic.

This sequence belongs to the G-protein coupled receptor 1 family.

Its subcellular location is the cell membrane. Odorant receptor. This chain is Olfactory receptor 8U8 (OR8U8), found in Homo sapiens (Human).